Here is an 858-residue protein sequence, read N- to C-terminus: Magnesium transporter ALR2 (858 aa).

Residues 1 to 14 are compositionally biased toward low complexity; that stretch reads MSSLSTSFDSSSDL. 3 disordered regions span residues 1–81, 318–337, and 365–396; these read MSSL…NGGY, TYNH…TSGS, and NNES…EGND. Over 1–741 the chain is Cytoplasmic; that stretch reads MSSLSTSFDS…NNKVTEMLGK (741 aa). Over residues 46–61 the composition is skewed to basic and acidic residues; sequence PIRHEALALKVDETKD. Positions 67-81 are enriched in low complexity; that stretch reads SSSNGENSGVENGGY. 2 stretches are compositionally biased toward basic and acidic residues: residues 367 to 379 and 386 to 395; these read ESVR…DLHP and NKIEGEKEGN. A helical membrane pass occupies residues 742 to 762; the sequence is VTMLGTMLVPLNVITGLFGMN. Residues 763–771 are Extracellular-facing; sequence VKVPGRNGS. A helical transmembrane segment spans residues 772-792; that stretch reads IAWWYGILGVLLLLAVISWFL. Over 793-858 the chain is Cytoplasmic; it reads ASYWIKKIDP…SLPSRYSRYN (66 aa).

Belongs to the CorA metal ion transporter (MIT) (TC 1.A.35) family.

It is found in the cell membrane. In terms of biological role, plasma membrane magnesium transporter. This Saccharomyces cerevisiae (strain ATCC 204508 / S288c) (Baker's yeast) protein is Magnesium transporter ALR2 (ALR2).